The following is a 354-amino-acid chain: Glycerol-1-phosphate dehydrogenase [NAD(P)+] (354 aa).

Residues 102-106 (GRSID) and 124-127 (TAAS) contribute to the NAD(+) site. D129 serves as a coordination point for substrate. Residue S133 coordinates NAD(+). D176 serves as a coordination point for substrate. Residues D176 and H256 each contribute to the Zn(2+) site. H260 is a binding site for substrate. H272 is a Zn(2+) binding site.

It belongs to the glycerol-1-phosphate dehydrogenase family. Zn(2+) serves as cofactor.

It localises to the cytoplasm. It catalyses the reaction sn-glycerol 1-phosphate + NAD(+) = dihydroxyacetone phosphate + NADH + H(+). The catalysed reaction is sn-glycerol 1-phosphate + NADP(+) = dihydroxyacetone phosphate + NADPH + H(+). It functions in the pathway membrane lipid metabolism; glycerophospholipid metabolism. Catalyzes the NAD(P)H-dependent reduction of dihydroxyacetonephosphate (DHAP or glycerone phosphate) to glycerol 1-phosphate (G1P). The G1P thus generated is used as the glycerophosphate backbone of phospholipids in the cellular membranes of Archaea. The polypeptide is Glycerol-1-phosphate dehydrogenase [NAD(P)+] (Methanothrix thermoacetophila (strain DSM 6194 / JCM 14653 / NBRC 101360 / PT) (Methanosaeta thermophila)).